The chain runs to 177 residues: Archaemetzincin (177 aa).

Histidine 129 lines the Zn(2+) pocket. The Proton acceptor role is filled by glutamate 130. Zn(2+)-binding residues include histidine 133, histidine 139, cysteine 140, cysteine 145, cysteine 164, and cysteine 167.

The protein belongs to the peptidase M54 family. In terms of assembly, monomer. Zn(2+) is required as a cofactor.

Functionally, probable zinc metalloprotease whose natural substrate is unknown. This chain is Archaemetzincin, found in Sulfolobus acidocaldarius (strain ATCC 33909 / DSM 639 / JCM 8929 / NBRC 15157 / NCIMB 11770).